The following is a 385-amino-acid chain: Methylthioribose-1-phosphate isomerase (385 aa).

The active-site Proton donor is the aspartate 255.

Belongs to the eIF-2B alpha/beta/delta subunits family. MtnA subfamily.

It localises to the cytoplasm. The protein localises to the nucleus. It catalyses the reaction 5-(methylsulfanyl)-alpha-D-ribose 1-phosphate = 5-(methylsulfanyl)-D-ribulose 1-phosphate. It participates in amino-acid biosynthesis; L-methionine biosynthesis via salvage pathway; L-methionine from S-methyl-5-thio-alpha-D-ribose 1-phosphate: step 1/6. Catalyzes the interconversion of methylthioribose-1-phosphate (MTR-1-P) into methylthioribulose-1-phosphate (MTRu-1-P). This chain is Methylthioribose-1-phosphate isomerase (mri1), found in Aspergillus clavatus (strain ATCC 1007 / CBS 513.65 / DSM 816 / NCTC 3887 / NRRL 1 / QM 1276 / 107).